The following is a 354-amino-acid chain: Uroporphyrinogen decarboxylase (354 aa).

Substrate is bound by residues 27 to 31 (RQAGR), aspartate 77, tyrosine 154, threonine 209, and histidine 327.

It belongs to the uroporphyrinogen decarboxylase family. As to quaternary structure, homodimer.

The protein resides in the cytoplasm. It catalyses the reaction uroporphyrinogen III + 4 H(+) = coproporphyrinogen III + 4 CO2. The protein operates within porphyrin-containing compound metabolism; protoporphyrin-IX biosynthesis; coproporphyrinogen-III from 5-aminolevulinate: step 4/4. Functionally, catalyzes the decarboxylation of four acetate groups of uroporphyrinogen-III to yield coproporphyrinogen-III. The polypeptide is Uroporphyrinogen decarboxylase (Shigella dysenteriae serotype 1 (strain Sd197)).